The primary structure comprises 140 residues: Large ribosomal subunit protein uL16 (140 aa).

It belongs to the universal ribosomal protein uL16 family. As to quaternary structure, part of the 50S ribosomal subunit.

Functionally, binds 23S rRNA and is also seen to make contacts with the A and possibly P site tRNAs. This chain is Large ribosomal subunit protein uL16, found in Phytoplasma australiense.